Here is a 200-residue protein sequence, read N- to C-terminus: Glycerol-3-phosphate acyltransferase (200 aa).

5 consecutive transmembrane segments (helical) span residues 2 to 22 (FNIP…AVIV), 51 to 71 (KAAA…VLLA), 84 to 104 (AIAA…FFGF), 114 to 134 (LGVL…IWLV), and 159 to 179 (FFMP…LVLF).

Belongs to the PlsY family. As to quaternary structure, probably interacts with PlsX.

It is found in the cell inner membrane. The enzyme catalyses an acyl phosphate + sn-glycerol 3-phosphate = a 1-acyl-sn-glycero-3-phosphate + phosphate. The protein operates within lipid metabolism; phospholipid metabolism. Functionally, catalyzes the transfer of an acyl group from acyl-phosphate (acyl-PO(4)) to glycerol-3-phosphate (G3P) to form lysophosphatidic acid (LPA). This enzyme utilizes acyl-phosphate as fatty acyl donor, but not acyl-CoA or acyl-ACP. The sequence is that of Glycerol-3-phosphate acyltransferase from Neisseria meningitidis serogroup B (strain ATCC BAA-335 / MC58).